Consider the following 96-residue polypeptide: Cytochrome c-553 (96 aa).

The N-terminal stretch at 1–19 is a signal peptide; sequence MKKVIVALGVLAFANVLMA. Cys29, Cys32, His33, and Met73 together coordinate heme c.

Belongs to the cytochrome c family. In terms of processing, binds 1 heme c group covalently per subunit.

The protein localises to the periplasm. In terms of biological role, natural electron acceptor for a formate dehydrogenase. This chain is Cytochrome c-553, found in Helicobacter pylori (strain J99 / ATCC 700824) (Campylobacter pylori J99).